We begin with the raw amino-acid sequence, 593 residues long: UvrABC system protein C (593 aa).

Positions 14-91 (DKPGCYLMKN…IKEHDPRYNV (78 aa)) constitute a GIY-YIG domain. The UVR domain occupies 196–231 (EEMKQTLTEKMLQAAENMEFERAKEYRDQIKSIEAV).

The protein belongs to the UvrC family. Interacts with UvrB in an incision complex.

The protein localises to the cytoplasm. Functionally, the UvrABC repair system catalyzes the recognition and processing of DNA lesions. UvrC both incises the 5' and 3' sides of the lesion. The N-terminal half is responsible for the 3' incision and the C-terminal half is responsible for the 5' incision. This chain is UvrABC system protein C, found in Brevibacillus brevis (strain 47 / JCM 6285 / NBRC 100599).